Consider the following 112-residue polypeptide: Small ribosomal subunit protein bS6 (112 aa).

The protein belongs to the bacterial ribosomal protein bS6 family.

Binds together with bS18 to 16S ribosomal RNA. This chain is Small ribosomal subunit protein bS6, found in Chlamydia trachomatis serovar L2 (strain ATCC VR-902B / DSM 19102 / 434/Bu).